Consider the following 369-residue polypeptide: Protein RecA (369 aa).

The segment covering 1 to 10 (MARTTDDSKK) has biased composition (basic and acidic residues). Positions 1–20 (MARTTDDSKKAAPAAGTADE) are disordered. 82-89 (GPESSGKT) provides a ligand contact to ATP. Residues 350–369 (PAAAVAAPDEGDDDLGDEEV) are disordered. Over residues 358 to 369 (DEGDDDLGDEEV) the composition is skewed to acidic residues.

Belongs to the RecA family.

The protein resides in the cytoplasm. Functionally, can catalyze the hydrolysis of ATP in the presence of single-stranded DNA, the ATP-dependent uptake of single-stranded DNA by duplex DNA, and the ATP-dependent hybridization of homologous single-stranded DNAs. It interacts with LexA causing its activation and leading to its autocatalytic cleavage. The polypeptide is Protein RecA (Gloeobacter violaceus (strain ATCC 29082 / PCC 7421)).